A 360-amino-acid polypeptide reads, in one-letter code: GTP 3',8-cyclase (360 aa).

The 219-residue stretch at 33-251 folds into the Radical SAM core domain; it reads RFGRSATDLR…LQPHFRLRPD (219 aa). Arg42 is a GTP binding site. Residues Cys49 and Cys53 each contribute to the [4Fe-4S] cluster site. Tyr55 contributes to the S-adenosyl-L-methionine binding site. A [4Fe-4S] cluster-binding site is contributed by Cys56. Arg93 serves as a coordination point for GTP. Gly97 is a binding site for S-adenosyl-L-methionine. Thr124 contributes to the GTP binding site. Ser148 is an S-adenosyl-L-methionine binding site. Lys185 contacts GTP. An S-adenosyl-L-methionine-binding site is contributed by Met219. 2 residues coordinate [4Fe-4S] cluster: Cys287 and Cys290. 292–294 provides a ligand contact to GTP; that stretch reads RTR. Cys304 serves as a coordination point for [4Fe-4S] cluster.

Belongs to the radical SAM superfamily. MoaA family. Monomer and homodimer. It depends on [4Fe-4S] cluster as a cofactor.

It catalyses the reaction GTP + AH2 + S-adenosyl-L-methionine = (8S)-3',8-cyclo-7,8-dihydroguanosine 5'-triphosphate + 5'-deoxyadenosine + L-methionine + A + H(+). Its pathway is cofactor biosynthesis; molybdopterin biosynthesis. Its function is as follows. Catalyzes the cyclization of GTP to (8S)-3',8-cyclo-7,8-dihydroguanosine 5'-triphosphate. This is GTP 3',8-cyclase from Mycobacterium marinum (strain ATCC BAA-535 / M).